Reading from the N-terminus, the 620-residue chain is 1-deoxy-D-xylulose-5-phosphate synthase (620 aa).

Thiamine diphosphate contacts are provided by residues His-80 and 121 to 123; that span reads GHS. Asp-152 is a Mg(2+) binding site. Residues 153-154, Asn-181, Tyr-288, and Glu-370 contribute to the thiamine diphosphate site; that span reads GA. Asn-181 contributes to the Mg(2+) binding site.

Belongs to the transketolase family. DXPS subfamily. As to quaternary structure, homodimer. Mg(2+) is required as a cofactor. Requires thiamine diphosphate as cofactor.

It catalyses the reaction D-glyceraldehyde 3-phosphate + pyruvate + H(+) = 1-deoxy-D-xylulose 5-phosphate + CO2. It functions in the pathway metabolic intermediate biosynthesis; 1-deoxy-D-xylulose 5-phosphate biosynthesis; 1-deoxy-D-xylulose 5-phosphate from D-glyceraldehyde 3-phosphate and pyruvate: step 1/1. Functionally, catalyzes the acyloin condensation reaction between C atoms 2 and 3 of pyruvate and glyceraldehyde 3-phosphate to yield 1-deoxy-D-xylulose-5-phosphate (DXP). This chain is 1-deoxy-D-xylulose-5-phosphate synthase, found in Klebsiella pneumoniae subsp. pneumoniae (strain ATCC 700721 / MGH 78578).